Here is an 852-residue protein sequence, read N- to C-terminus: DNA mismatch repair protein MutS (852 aa).

615 to 622 (GPNMAGKS) provides a ligand contact to ATP.

This sequence belongs to the DNA mismatch repair MutS family.

Functionally, this protein is involved in the repair of mismatches in DNA. It is possible that it carries out the mismatch recognition step. This protein has a weak ATPase activity. The polypeptide is DNA mismatch repair protein MutS (Thermodesulfovibrio yellowstonii (strain ATCC 51303 / DSM 11347 / YP87)).